Here is a 543-residue protein sequence, read N- to C-terminus: Sodium/glucose cotransporter (543 aa).

14 helical membrane-spanning segments follow: residues 10-30, 45-65, 79-99, 129-149, 156-176, 193-213, 246-266, 287-307, 345-365, 401-421, 427-447, 455-475, 483-503, and 523-543; these read FIDI…GLWV, FLAG…AANI, SIGL…IIVG, ILAV…VLYL, TILG…ALVY, VFFL…FIGG, LPGI…YWGF, IVFA…PGIA, FLPV…IVSS, TAAV…GGIG, IQEY…LGLF, GAII…FMPL, MLYT…STSI, and SFNI…TLFW.

The protein localises to the cell membrane. Functionally, actively transports glucose into cells by Na(+) cotransport. The protein is Sodium/glucose cotransporter (sglT) of Vibrio parahaemolyticus.